Here is a 1076-residue protein sequence, read N- to C-terminus: Structural maintenance of chromosomes protein 5 (1076 aa).

49 to 56 (GHNGSGKS) is an ATP binding site. Residues 190 to 415 (STSIEDKCTT…KRDEEQNSQL (226 aa)) adopt a coiled-coil conformation. The span at 375 to 410 (EQKYSTAERDSRQEEDAIQKKSYEMRQLENKKRDEE) shows a compositional bias: basic and acidic residues. Residues 375–420 (EQKYSTAERDSRQEEDAIQKKSYEMRQLENKKRDEEQNSQLNRQDR) form a disordered region. Residues 416 to 617 (NRQDRYRVLQ…ANTWRDQFFK (202 aa)) are flexible hinge. Coiled coils occupy residues 627–713 (NSIL…EKKA) and 749–786 (KSRV…ALNH).

Belongs to the SMC family. SMC5 subfamily. In terms of assembly, interacts with smc-6. As to expression, expressed in the germline (at protein level).

The protein localises to the nucleus. The protein resides in the chromosome. In terms of biological role, core component of the smc-5/smc-6 complex. Functions in DNA double strand break repair by promoting sister-chromatid homologous recombination during meiosis. Acts in a DNA repair pathway for removal of ionizing radiation- and ultraviolet (UV) radiation-induced DNA lesions that is distinct from classical nucleotide excision repair and the translesion synthesis pathway. Also involved in the recovery of stalled replication forks. This Caenorhabditis elegans protein is Structural maintenance of chromosomes protein 5.